We begin with the raw amino-acid sequence, 317 residues long: Ribosomal RNA small subunit methyltransferase H (317 aa).

S-adenosyl-L-methionine is bound by residues 39-41, Asp59, Phe83, Asp104, and Gln111; that span reads GGH.

This sequence belongs to the methyltransferase superfamily. RsmH family.

It is found in the cytoplasm. It carries out the reaction cytidine(1402) in 16S rRNA + S-adenosyl-L-methionine = N(4)-methylcytidine(1402) in 16S rRNA + S-adenosyl-L-homocysteine + H(+). Its function is as follows. Specifically methylates the N4 position of cytidine in position 1402 (C1402) of 16S rRNA. This Paraburkholderia phytofirmans (strain DSM 17436 / LMG 22146 / PsJN) (Burkholderia phytofirmans) protein is Ribosomal RNA small subunit methyltransferase H.